The following is a 698-amino-acid chain: Dual trans-enoyl reductase/FAD-dependent monooxygenase tazHJ (698 aa).

NADP(+) contacts are provided by residues 54 to 57 (STAT), 78 to 81 (SPRH), tyrosine 96, and 279 to 280 (IA). Residues glutamate 299, glycine 312, and arginine 372 each contribute to the FAD site. Residue arginine 455 is part of the active site. Aspartate 571 and alanine 584 together coordinate FAD.

In the N-terminal section; belongs to the zinc-containing alcohol dehydrogenase family. This sequence in the C-terminal section; belongs to the paxM FAD-dependent monooxygenase family.

The protein operates within secondary metabolite biosynthesis. Dual trans-enoyl reductase/FAD-dependent monooxygenase; part of the gene cluster that mediates the biosynthesis of azaterrilone A and other azaphilones, a class of fungal metabolites characterized by a highly oxygenated pyrano-quinone bicyclic core and exhibiting a broad range of bioactivities. The first step of the pathway begins with the non-reducing polyketide synthase tazA that assembles one acetyl-CoA starter unit, five malonyl-CoA units, and catalyzes a series of Claisen condensations, methylation, PT-mediated cyclization, and finally releases the first hexaketide precursor through the R-domain. The tazA product then undergoes reduction on its terminal ketone and the following pyran-ring formation by yet undetermined enzyme(s). Dehydration and enoyl reduction, possibly involving the trans-enoyl reductase tazE leads to the next intermediate. TazD is predicted as an acetyltransferase and might catalyze the acetylation steps leading to the synthesis of azaterrilone A. Azaterrilone A is not the final product of the taz pathway and both the highly reducing polyketide synthase tazB and the dual enzyme tazHJ catalyze late steps of the pathway, leading to the production of the 2 final stereoisomers that contain additional polyketide modification whose structures have still to be determined. The polypeptide is Dual trans-enoyl reductase/FAD-dependent monooxygenase tazHJ (Aspergillus terreus (strain NIH 2624 / FGSC A1156)).